Here is a 308-residue protein sequence, read N- to C-terminus: D-alanine--D-alanine ligase (308 aa).

The ATP-grasp domain occupies 103–302; the sequence is KTVMKTAGVP…FDELVQWMVE (200 aa). 130–184 is an ATP binding site; that stretch reads MEPPYVIKPVADGSSVGVYIITEQHQHPPQELFRDDWAYGDKLLVEKYVAGKELT. 3 residues coordinate Mg(2+): Asp-252, Glu-269, and Asn-271.

It belongs to the D-alanine--D-alanine ligase family. The cofactor is Mg(2+). It depends on Mn(2+) as a cofactor.

The protein resides in the cytoplasm. It catalyses the reaction 2 D-alanine + ATP = D-alanyl-D-alanine + ADP + phosphate + H(+). It functions in the pathway cell wall biogenesis; peptidoglycan biosynthesis. Functionally, cell wall formation. This is D-alanine--D-alanine ligase from Rhodopseudomonas palustris (strain BisA53).